An 856-amino-acid chain; its full sequence is Leucine--tRNA ligase (856 aa).

The short motif at 53–63 is the 'HIGH' region element; sequence PYPSGNLHMGH. The 'KMSKS' region signature appears at 622 to 626; the sequence is KMSKS. Residue lysine 625 coordinates ATP.

Belongs to the class-I aminoacyl-tRNA synthetase family.

The protein resides in the cytoplasm. The enzyme catalyses tRNA(Leu) + L-leucine + ATP = L-leucyl-tRNA(Leu) + AMP + diphosphate. The sequence is that of Leucine--tRNA ligase from Prochlorococcus marinus (strain AS9601).